The chain runs to 117 residues: UPF0342 protein LEUM_1212 (117 aa).

Belongs to the UPF0342 family.

The protein is UPF0342 protein LEUM_1212 of Leuconostoc mesenteroides subsp. mesenteroides (strain ATCC 8293 / DSM 20343 / BCRC 11652 / CCM 1803 / JCM 6124 / NCDO 523 / NBRC 100496 / NCIMB 8023 / NCTC 12954 / NRRL B-1118 / 37Y).